Consider the following 1163-residue polypeptide: Receptor-type guanylate cyclase gcy-21 (1163 aa).

An N-terminal signal peptide occupies residues 1–17 (MLSAVLLLLFFIQNVQN). The Extracellular portion of the chain corresponds to 18–490 (FDKIELEDIT…ENCGPPANNT (473 aa)). N-linked (GlcNAc...) asparagine glycosylation is found at Asn102, Asn296, Asn322, Asn346, Asn466, and Asn488. A helical transmembrane segment spans residues 491–511 (FIIVISVGVAVLIGLAIAAAF). Residues 512 to 1163 (LYKRYRYERR…QIQEKTYEFS (652 aa)) lie on the Cytoplasmic side of the membrane. The Protein kinase domain occupies 587 to 882 (FNTGSTARAG…QIKRKLKPLT (296 aa)). Residues 593–601 (ARAGPFGPI) and Lys635 each bind ATP. Positions 901 to 930 (TDKLEKDIAERNEELEGEKAKSEALLKMML) form a coiled coil. The Guanylate cyclase domain occupies 953-1083 (TVFFSDCPGF…DTVNTASRME (131 aa)).

Belongs to the adenylyl cyclase class-4/guanylyl cyclase family. Expressed in ASG sensory neurons.

It is found in the cell membrane. It carries out the reaction GTP = 3',5'-cyclic GMP + diphosphate. Its function is as follows. Guanylate cyclase involved in the production of the second messenger cGMP. Plays a role in dauer formation. This chain is Receptor-type guanylate cyclase gcy-21, found in Caenorhabditis elegans.